A 325-amino-acid chain; its full sequence is Beta-ketoacyl-[acyl-carrier-protein] synthase III (325 aa).

Residues cysteine 119 and histidine 252 contribute to the active site. The ACP-binding stretch occupies residues 253–257; it reads QANIR. The active site involves asparagine 282.

This sequence belongs to the thiolase-like superfamily. FabH family. As to quaternary structure, homodimer.

It localises to the cytoplasm. The catalysed reaction is malonyl-[ACP] + acetyl-CoA + H(+) = 3-oxobutanoyl-[ACP] + CO2 + CoA. It participates in lipid metabolism; fatty acid biosynthesis. In terms of biological role, catalyzes the condensation reaction of fatty acid synthesis by the addition to an acyl acceptor of two carbons from malonyl-ACP. Catalyzes the first condensation reaction which initiates fatty acid synthesis and may therefore play a role in governing the total rate of fatty acid production. Possesses both acetoacetyl-ACP synthase and acetyl transacylase activities. Its substrate specificity determines the biosynthesis of branched-chain and/or straight-chain of fatty acids. This chain is Beta-ketoacyl-[acyl-carrier-protein] synthase III, found in Polaromonas sp. (strain JS666 / ATCC BAA-500).